The following is a 175-amino-acid chain: Transcription factor E (175 aa).

An HTH TFE/IIEalpha-type domain is found at 3-88; the sequence is ENPLIQQVLF…TWKPSLEKVP (86 aa).

The protein belongs to the TFE family. Monomer. Interaction with RNA polymerase subunits RpoF and RpoE is necessary for Tfe stimulatory transcription activity. Able to interact with Tbp and RNA polymerase in the absence of DNA promoter. Interacts both with the preinitiation and elongation complexes.

Transcription factor that plays a role in the activation of archaeal genes transcribed by RNA polymerase. Facilitates transcription initiation by enhancing TATA-box recognition by TATA-box-binding protein (Tbp), and transcription factor B (Tfb) and RNA polymerase recruitment. Not absolutely required for transcription in vitro, but particularly important in cases where Tbp or Tfb function is not optimal. It dynamically alters the nucleic acid-binding properties of RNA polymerases by stabilizing the initiation complex and destabilizing elongation complexes. Seems to translocate with the RNA polymerase following initiation and acts by binding to the non template strand of the transcription bubble in elongation complexes. The sequence is that of Transcription factor E from Methanococcus maripaludis (strain DSM 14266 / JCM 13030 / NBRC 101832 / S2 / LL).